Consider the following 444-residue polypeptide: Aspartate--tRNA(Asp/Asn) ligase (444 aa).

E176 is a binding site for L-aspartate. The aspartate stretch occupies residues Q198–K201. R220 contacts L-aspartate. Residues R220–E222, R228–L230, and E367 contribute to the ATP site. Mg(2+)-binding residues include E367 and S370. Residues S370 and R374 each coordinate L-aspartate. G415–R418 serves as a coordination point for ATP.

The protein belongs to the class-II aminoacyl-tRNA synthetase family. Type 2 subfamily. Homodimer. Mg(2+) serves as cofactor.

The protein resides in the cytoplasm. It catalyses the reaction tRNA(Asx) + L-aspartate + ATP = L-aspartyl-tRNA(Asx) + AMP + diphosphate. Functionally, aspartyl-tRNA synthetase with relaxed tRNA specificity since it is able to aspartylate not only its cognate tRNA(Asp) but also tRNA(Asn). Reaction proceeds in two steps: L-aspartate is first activated by ATP to form Asp-AMP and then transferred to the acceptor end of tRNA(Asp/Asn). The polypeptide is Aspartate--tRNA(Asp/Asn) ligase (Methanosarcina acetivorans (strain ATCC 35395 / DSM 2834 / JCM 12185 / C2A)).